The sequence spans 294 residues: N-acetylmuramic acid 6-phosphate etherase (294 aa).

The region spanning 54–217 (VIQSFEEEGR…STASMIGVGK (164 aa)) is the SIS domain. E82 serves as the catalytic Proton donor. Residue E113 is part of the active site.

The protein belongs to the GCKR-like family. MurNAc-6-P etherase subfamily. Homodimer.

It catalyses the reaction N-acetyl-D-muramate 6-phosphate + H2O = N-acetyl-D-glucosamine 6-phosphate + (R)-lactate. It participates in amino-sugar metabolism; N-acetylmuramate degradation. Its function is as follows. Specifically catalyzes the cleavage of the D-lactyl ether substituent of MurNAc 6-phosphate, producing GlcNAc 6-phosphate and D-lactate. This Bacillus anthracis (strain A0248) protein is N-acetylmuramic acid 6-phosphate etherase.